Here is a 344-residue protein sequence, read N- to C-terminus: Ion-translocating oxidoreductase complex subunit D (344 aa).

Helical transmembrane passes span 23–43, 44–64, 77–99, and 120–140; these read LVLG…GPGT, LLNL…MLAL, SALV…WLTL, and PFNP…LEMT. Thr-172 carries the post-translational modification FMN phosphoryl threonine. 5 helical membrane-spanning segments follow: residues 198–218, 222–242, 252–272, 285–305, and 306–326; these read LGSA…LFLL, LFTW…SLLF, GSPL…FIVT, LVFG…GGYP, and DGVA…DYYT.

It belongs to the NqrB/RnfD family. As to quaternary structure, the complex is composed of six subunits: RnfA, RnfB, RnfC, RnfD, RnfE and RnfG. FMN serves as cofactor.

It localises to the cell inner membrane. Functionally, part of a membrane-bound complex that couples electron transfer with translocation of ions across the membrane. The sequence is that of Ion-translocating oxidoreductase complex subunit D from Pseudomonas aeruginosa (strain UCBPP-PA14).